A 1013-amino-acid chain; its full sequence is Alpha-2-macroglobulin homolog (1013 aa).

The interval 804-844 is disordered; that stretch reads AQRGANGERDGLRETVPVRPAGARQLLSGSGSVGADKAGGN.

The protein belongs to the protease inhibitor I39 (alpha-2-macroglobulin) family. Bacterial alpha-2-macroglobulin subfamily.

This chain is Alpha-2-macroglobulin homolog, found in Deinococcus radiodurans (strain ATCC 13939 / DSM 20539 / JCM 16871 / CCUG 27074 / LMG 4051 / NBRC 15346 / NCIMB 9279 / VKM B-1422 / R1).